A 153-amino-acid polypeptide reads, in one-letter code: SsrA-binding protein (153 aa).

Positions 132-142 (ALKRKEAEREA) are enriched in basic and acidic residues. The disordered stretch occupies residues 132-153 (ALKRKEAEREAQSAMKRYAKGY).

Belongs to the SmpB family.

Its subcellular location is the cytoplasm. In terms of biological role, required for rescue of stalled ribosomes mediated by trans-translation. Binds to transfer-messenger RNA (tmRNA), required for stable association of tmRNA with ribosomes. tmRNA and SmpB together mimic tRNA shape, replacing the anticodon stem-loop with SmpB. tmRNA is encoded by the ssrA gene; the 2 termini fold to resemble tRNA(Ala) and it encodes a 'tag peptide', a short internal open reading frame. During trans-translation Ala-aminoacylated tmRNA acts like a tRNA, entering the A-site of stalled ribosomes, displacing the stalled mRNA. The ribosome then switches to translate the ORF on the tmRNA; the nascent peptide is terminated with the 'tag peptide' encoded by the tmRNA and targeted for degradation. The ribosome is freed to recommence translation, which seems to be the essential function of trans-translation. In Campylobacter hominis (strain ATCC BAA-381 / DSM 21671 / CCUG 45161 / LMG 19568 / NCTC 13146 / CH001A), this protein is SsrA-binding protein.